The chain runs to 92 residues: RNA-binding protein Hfq (92 aa).

The Sm domain maps to 9 to 68 (DPFLNALRRERVPVSIYLVNGIKLQGQVESFDQFVILLKNTVSQMVYKHAISTVVPSRPF).

Belongs to the Hfq family. Homohexamer.

RNA chaperone that binds small regulatory RNA (sRNAs) and mRNAs to facilitate mRNA translational regulation in response to envelope stress, environmental stress and changes in metabolite concentrations. Also binds with high specificity to tRNAs. The protein is RNA-binding protein Hfq of Shewanella halifaxensis (strain HAW-EB4).